The sequence spans 369 residues: Peptide chain release factor 2 (369 aa).

Residue Gln247 is modified to N5-methylglutamine.

This sequence belongs to the prokaryotic/mitochondrial release factor family. Methylated by PrmC. Methylation increases the termination efficiency of RF2.

Its subcellular location is the cytoplasm. In terms of biological role, peptide chain release factor 2 directs the termination of translation in response to the peptide chain termination codons UGA and UAA. This Phenylobacterium zucineum (strain HLK1) protein is Peptide chain release factor 2.